The sequence spans 252 residues: Short-chain dehydrogenase/reductase eriH (252 aa).

8 residues coordinate NADP(+): I16, D65, N92, K125, Y158, K162, V191, and T193. The Proton acceptor role is filled by Y158. Y158 acts as the Proton donor in catalysis. The active-site Lowers pKa of active site Tyr is K162.

This sequence belongs to the short-chain dehydrogenases/reductases (SDR) family.

The catalysed reaction is cyathadiol + reduced [NADPH--hemoprotein reductase] + O2 = cyathatriol + oxidized [NADPH--hemoprotein reductase] + H2O + H(+). It carries out the reaction 11-O-acetylcyathatriol + A = 11-O-acetylcyathin A3 + AH2. It catalyses the reaction cyathatriol + A = cyathin A3 + AH2. It functions in the pathway secondary metabolite biosynthesis. Its function is as follows. Short-chain dehydrogenase/reductase; part of the gene cluster that mediates the biosynthesis of erinacines, cyathane-xylosides that show unique biological activities, including leishmanicidal activity, stimulating activity for nerve growth-factor synthesis, and agonistic activity toward the kappa opioid receptor. Within the pathway, eriH works with eriA to catalyze C-11 hydroxylation of cyathadiol to produce cyathatriol. EriH also catalyzes oxidation of 11-O-acetyl-cyathatriol into 1-O-acetylcyathin A3. In the absence of eriL and eriJ, the SDR eriH is able to convert cyathatriol to cyathin A3; this is likely a switching mechanism in the biosynthesis of cyathins (C-14 ketogroup)and erinacines (C-14 glycosylated group). The first step of the erinacines biosynthesis pathway is catalyzed by the geranylgeranyl diphosphate (GGPP) synthase eriE via conversion of farnesyl pyrophosphate and isopentyl pyrophosphate into geranylgeranyl pyrophosphate (GGPP). GGPP is then substrate of the diterpene cyclase eriG for the production of cyatha-3,12-diene. The cytochrome P450 monooxygenase eriI then hydroxylates cyatha-3,12-diene at C-14 of the seven-membered ring to produce erinacol, which is further hydroxylated at C-15 by the cytochrome P450 monooxygenase eriC to yield cyathadiol. The cytochrome P450 monooxygenase eriA then catalyzes C-11 hydroxylation in the presence of the short chain dehydrogenase/reductase (SDR) eriH, which leads to the production of cyathatriol. The acetyltransferase eriL converts cyathatriol into 11-O-acetyl-cyathatriol. The SDR eriH catalyzes further oxidation of 11-O-acetyl-cyathatriol into 1-O-acetylcyathin A3. Finally, the glycosyl transferase eriJ tranfers xylose from UDP-xylose onto C-14 of 11-O-acetyl-cyathatriol to form eracine Q. EriJ is also able to convert 11-O-acetyl-cyathatriol to eracine Q2 by using UDP-D-glucose as cosubstrate, but at a lower rate. The protein is Short-chain dehydrogenase/reductase eriH of Hericium erinaceus (Lion's mane mushroom).